The primary structure comprises 452 residues: Alkane uptake protein A (452 aa).

Residues 1–36 form the signal peptide; that stretch reads MSERSVYMVLSPRFSVRAVSLAVAAVSASLSMPTSA.

Belongs to the OmpP1/FadL family. As to quaternary structure, interacts with the inner membrane protein AupB.

Its subcellular location is the cell outer membrane. Required for growth on alkanes. Probably involved in the uptake of micelle-solubilized alkanes. In Marinobacter nauticus (strain ATCC 49840 / DSM 8798 / CIP 103578 / SP17) (Marinobacter hydrocarbonoclasticus), this protein is Alkane uptake protein A.